Here is a 325-residue protein sequence, read N- to C-terminus: Eukaryotic translation initiation factor 3 subunit I (325 aa).

4 WD repeats span residues 8-47 (GHER…RLGT), 50-91 (GHTG…ALLK), 144-183 (CNDS…VLVN), and 186-225 (EHSR…HQKT). Thr-219 carries the post-translational modification Phosphothreonine. Position 264 is an N6-acetyllysine (Lys-264). A Glycyl lysine isopeptide (Lys-Gly) (interchain with G-Cter in ubiquitin) cross-link involves residue Lys-282. One copy of the WD 5 repeat lies at 283 to 324 (GHFGLINSVAFHPDGKSYSSGGEDGYVRIHYFDPQYFEFEFE). At Tyr-308 the chain carries Phosphotyrosine.

It belongs to the eIF-3 subunit I family. As to quaternary structure, component of the eukaryotic translation initiation factor 3 (eIF-3) complex, which is composed of 13 subunits: EIF3A, EIF3B, EIF3C, EIF3D, EIF3E, EIF3F, EIF3G, EIF3H, EIF3I, EIF3J, EIF3K, EIF3L and EIF3M. The eIF-3 complex appears to include 3 stable modules: module A is composed of EIF3A, EIF3B, EIF3G and EIF3I; module B is composed of EIF3F, EIF3H, and EIF3M; and module C is composed of EIF3C, EIF3D, EIF3E, EIF3K and EIF3L. EIF3C of module C binds EIF3B of module A and EIF3H of module B, thereby linking the three modules. EIF3J is a labile subunit that binds to the eIF-3 complex via EIF3B. The eIF-3 complex interacts with RPS6KB1 under conditions of nutrient depletion. Mitogenic stimulation leads to binding and activation of a complex composed of MTOR and RPTOR, leading to phosphorylation and release of RPS6KB1 and binding of EIF4B to eIF-3. In terms of processing, phosphorylated by TGF-beta type II receptor.

The protein localises to the cytoplasm. Its function is as follows. Component of the eukaryotic translation initiation factor 3 (eIF-3) complex, which is required for several steps in the initiation of protein synthesis. The eIF-3 complex associates with the 40S ribosome and facilitates the recruitment of eIF-1, eIF-1A, eIF-2:GTP:methionyl-tRNAi and eIF-5 to form the 43S pre-initiation complex (43S PIC). The eIF-3 complex stimulates mRNA recruitment to the 43S PIC and scanning of the mRNA for AUG recognition. The eIF-3 complex is also required for disassembly and recycling of post-termination ribosomal complexes and subsequently prevents premature joining of the 40S and 60S ribosomal subunits prior to initiation. The eIF-3 complex specifically targets and initiates translation of a subset of mRNAs involved in cell proliferation, including cell cycling, differentiation and apoptosis, and uses different modes of RNA stem-loop binding to exert either translational activation or repression. This chain is Eukaryotic translation initiation factor 3 subunit I, found in Pongo abelii (Sumatran orangutan).